Consider the following 535-residue polypeptide: Signal transduction histidine-protein kinase AfsQ2 (535 aa).

At 1–30 (MTREHQGGTRGLAAARKGFWSGLRFTSLRL) the chain is on the cytoplasmic side. The chain crosses the membrane as a helical span at residues 31–52 (RLVLVFGLVALTAAVSASGIAY). The Extracellular segment spans residues 53–198 (WLNREAVLTR…SLEPEAKDLN (146 aa)). The helical transmembrane segment at 199–219 (SLAWSLGIATALALLGSALLA) threads the bilayer. The Cytoplasmic segment spans residues 220-535 (QALATTVLKP…DRGKDAKGQV (316 aa)). Residues 224–276 (TTVLKPVHRLGVAARRLGEGKLDTRLRVSGTDELADLSRTFNSAAENLEKRVA) enclose the HAMP domain. Residues 291–510 (DMSHELRTPL…VFTLRLPQDP (220 aa)) form the Histidine kinase domain. Residue His294 is modified to Phosphohistidine. The segment at 493–535 (ENAPEGGAVFTLRLPQDPSPPADEDGGPDEETEDRGKDAKGQV) is disordered. Acidic residues predominate over residues 514–525 (ADEDGGPDEETE). Over residues 526-535 (DRGKDAKGQV) the composition is skewed to basic and acidic residues.

The protein localises to the cell membrane. The catalysed reaction is ATP + protein L-histidine = ADP + protein N-phospho-L-histidine.. In terms of biological role, forms part of a two-component regulatory system AfsQ1/AfsQ2 involved in secondary metabolism. May activate AfsQ1 by phosphorylation. This chain is Signal transduction histidine-protein kinase AfsQ2 (afsQ2), found in Streptomyces coelicolor (strain ATCC BAA-471 / A3(2) / M145).